We begin with the raw amino-acid sequence, 72 residues long: Toxin Acra II-2 (72 aa).

In terms of domain architecture, LCN-type CS-alpha/beta spans 3–67 (VPGNYPLNTN…VWNAAKNYCK (65 aa)). Disulfide bonds link Cys-18/Cys-41, Cys-27/Cys-46, and Cys-31/Cys-48.

The protein belongs to the long (3 C-C) scorpion toxin superfamily. Sodium channel inhibitor family. Beta subfamily. In terms of tissue distribution, expressed by the venom gland.

The protein resides in the secreted. In terms of biological role, binds to sodium channels (Nav) and affects the channel activation process. This Androctonus crassicauda (Arabian fat-tailed scorpion) protein is Toxin Acra II-2.